Here is a 647-residue protein sequence, read N- to C-terminus: MSKIIGIDLGTTNSCVSIMEGSQPKVLENAEGARTTPSVVAFTEDGEKLVGQPAKRQAVTNPENTIFAVKRLIGRSFEDPTVKKDIAAAPFKIVNSEKGDAWIEAKGEKYSPSQISAFILQKMKETAEKYLGQEVTKAVITVPAYFNDAQRQATKDAGKIAGLEVLRIINEPTAASLAYGLDKKQNKKIAVYDLGGGTFDVSILELGDGVFEVKSTNGDTFLGGEDFDNTIVDYLIGEFKKDSGIDLRSDKLALQRLKEAAEKAKIELSSAEQTDVNLPFITADKTGPKHINLKMTRAKLEALVEDLISRTLPPCKTALKDAGLTASEIDEIVMVGGMTRMPKVLSEVKNFFGKEPNKSVNPDEVVAMGAAIQAGVLQGDVKDVLLLDVTPLSLGIETLGGVSTKLIEKNTTIPTKKSQVFSTADDNQPAVSIRVLQGEREMASDNKMLGNFELVGIAPAPRGVPQIEVTFDIDANGIVSVSAKDKGTGKEQKIQIQASGGLSDEEIEKMVKDAEANKEEDKKKRESVDVRNQADTLLHSTEKNLKEHGAKVSDADKKAIEDASTDLKEAIKGTDTEEIKKKTETLVQASMKLGEAIYKSQEKKEGSPKEGDKNDEGKKDDNVVDADFEEVKEESKEGKEEDKEKSA.

Residue threonine 198 is modified to Phosphothreonine; by autocatalysis. Basic and acidic residues-rich tracts occupy residues 514-529 (AEAN…ESVD), 540-557 (STEK…DADK), and 600-622 (SQEK…KDDN). 2 disordered regions span residues 514–557 (AEAN…DADK) and 596–647 (AIYK…EKSA). Over residues 623-632 (VVDADFEEVK) the composition is skewed to acidic residues. A compositionally biased stretch (basic and acidic residues) spans 633-647 (EESKEGKEEDKEKSA).

The protein belongs to the heat shock protein 70 family.

In terms of biological role, acts as a chaperone. The sequence is that of Chaperone protein DnaK from Pelagibacter ubique (strain HTCC1062).